Reading from the N-terminus, the 340-residue chain is Ketol-acid reductoisomerase (NADP(+)) (340 aa).

The KARI N-terminal Rossmann domain occupies 1 to 183; that stretch reads MAITVYYDKD…GGGRTGIIET (183 aa). NADP(+)-binding positions include 26–29, arginine 49, serine 52, serine 54, and 84–87; these read FGSQ and DEIQ. Residue histidine 109 is part of the active site. Glycine 135 serves as a coordination point for NADP(+). One can recognise a KARI C-terminal knotted domain in the interval 184–329; the sequence is TFKAETETDL…RNLRAMMPWI (146 aa). Aspartate 192, glutamate 196, glutamate 228, and glutamate 232 together coordinate Mg(2+). Residue serine 253 participates in substrate binding.

The protein belongs to the ketol-acid reductoisomerase family. The cofactor is Mg(2+).

It catalyses the reaction (2R)-2,3-dihydroxy-3-methylbutanoate + NADP(+) = (2S)-2-acetolactate + NADPH + H(+). It carries out the reaction (2R,3R)-2,3-dihydroxy-3-methylpentanoate + NADP(+) = (S)-2-ethyl-2-hydroxy-3-oxobutanoate + NADPH + H(+). It functions in the pathway amino-acid biosynthesis; L-isoleucine biosynthesis; L-isoleucine from 2-oxobutanoate: step 2/4. The protein operates within amino-acid biosynthesis; L-valine biosynthesis; L-valine from pyruvate: step 2/4. In terms of biological role, involved in the biosynthesis of branched-chain amino acids (BCAA). Catalyzes an alkyl-migration followed by a ketol-acid reduction of (S)-2-acetolactate (S2AL) to yield (R)-2,3-dihydroxy-isovalerate. In the isomerase reaction, S2AL is rearranged via a Mg-dependent methyl migration to produce 3-hydroxy-3-methyl-2-ketobutyrate (HMKB). In the reductase reaction, this 2-ketoacid undergoes a metal-dependent reduction by NADPH to yield (R)-2,3-dihydroxy-isovalerate. The protein is Ketol-acid reductoisomerase (NADP(+)) of Campylobacter jejuni subsp. jejuni serotype O:6 (strain 81116 / NCTC 11828).